Consider the following 337-residue polypeptide: Anthranilate phosphoribosyltransferase (337 aa).

Residues Gly-80, 83–84, Thr-88, 90–93, 108–116, and Ser-120 contribute to the 5-phospho-alpha-D-ribose 1-diphosphate site; these read GD, NIST, and KHGNRSVSS. Gly-80 contributes to the anthranilate binding site. Ser-92 serves as a coordination point for Mg(2+). Position 111 (Asn-111) interacts with anthranilate. Arg-166 serves as a coordination point for anthranilate. Mg(2+) contacts are provided by Asp-225 and Glu-226.

It belongs to the anthranilate phosphoribosyltransferase family. Homodimer. Mg(2+) serves as cofactor.

The enzyme catalyses N-(5-phospho-beta-D-ribosyl)anthranilate + diphosphate = 5-phospho-alpha-D-ribose 1-diphosphate + anthranilate. It participates in amino-acid biosynthesis; L-tryptophan biosynthesis; L-tryptophan from chorismate: step 2/5. Functionally, catalyzes the transfer of the phosphoribosyl group of 5-phosphorylribose-1-pyrophosphate (PRPP) to anthranilate to yield N-(5'-phosphoribosyl)-anthranilate (PRA). This chain is Anthranilate phosphoribosyltransferase, found in Syntrophobacter fumaroxidans (strain DSM 10017 / MPOB).